We begin with the raw amino-acid sequence, 396 residues long: Stearoyl-[acyl-carrier-protein] 9-desaturase, chloroplastic (396 aa).

Residues 1 to 33 constitute a chloroplast transit peptide; that stretch reads MALKLNPFLSQTQKLPSFALPPMASTRSPKFYM. The Fe cation site is built by Glu138, Glu176, His179, Glu229, Glu262, and His265.

This sequence belongs to the fatty acid desaturase type 2 family. As to quaternary structure, homodimer. The cofactor is Fe(2+). As to expression, higher levels in developing seeds than in leaf and root tissues.

It is found in the plastid. The protein resides in the chloroplast. It catalyses the reaction octadecanoyl-[ACP] + 2 reduced [2Fe-2S]-[ferredoxin] + O2 + 2 H(+) = (9Z)-octadecenoyl-[ACP] + 2 oxidized [2Fe-2S]-[ferredoxin] + 2 H2O. The protein operates within lipid metabolism; fatty acid metabolism. Converts stearoyl-ACP to oleoyl-ACP by introduction of a cis double bond between carbons 9 and 10 of the acyl chain. This is Stearoyl-[acyl-carrier-protein] 9-desaturase, chloroplastic from Ricinus communis (Castor bean).